Reading from the N-terminus, the 207-residue chain is Guanylate kinase (207 aa).

Residues 4 to 184 (GTLYIVSAPS…ALTDLKTIIR (181 aa)) form the Guanylate kinase-like domain. 11-18 (APSGAGKS) provides a ligand contact to ATP.

The protein belongs to the guanylate kinase family.

The protein localises to the cytoplasm. It catalyses the reaction GMP + ATP = GDP + ADP. In terms of biological role, essential for recycling GMP and indirectly, cGMP. The sequence is that of Guanylate kinase from Escherichia coli O6:K15:H31 (strain 536 / UPEC).